A 281-amino-acid polypeptide reads, in one-letter code: Energy-coupling factor transporter ATP-binding protein EcfA1 (281 aa).

The region spanning 6-242 is the ABC transporter domain; it reads IDVKHLDYRY…GEALIKMGLD (237 aa). ATP is bound at residue 42-49; it reads GHNGSGKS.

It belongs to the ABC transporter superfamily. Energy-coupling factor EcfA family. As to quaternary structure, forms a stable energy-coupling factor (ECF) transporter complex composed of 2 membrane-embedded substrate-binding proteins (S component), 2 ATP-binding proteins (A component) and 2 transmembrane proteins (T component).

Its subcellular location is the cell membrane. Functionally, ATP-binding (A) component of a common energy-coupling factor (ECF) ABC-transporter complex. Unlike classic ABC transporters this ECF transporter provides the energy necessary to transport a number of different substrates. The protein is Energy-coupling factor transporter ATP-binding protein EcfA1 of Lactiplantibacillus plantarum (strain ATCC BAA-793 / NCIMB 8826 / WCFS1) (Lactobacillus plantarum).